The primary structure comprises 320 residues: Lipoyl synthase (320 aa).

Residues 1–28 form a disordered region; the sequence is MVTVVDRVTDRRLRHPEKAHRPDTSVQK. Residues 19–28 are compositionally biased toward basic and acidic residues; that stretch reads AHRPDTSVQK. Cysteine 59, cysteine 64, cysteine 70, cysteine 85, cysteine 89, cysteine 92, and serine 298 together coordinate [4Fe-4S] cluster. Residues 71–287 form the Radical SAM core domain; that stretch reads WSQRHASFMI…AKIGKVKGFL (217 aa).

It belongs to the radical SAM superfamily. Lipoyl synthase family. The cofactor is [4Fe-4S] cluster.

It localises to the cytoplasm. It carries out the reaction [[Fe-S] cluster scaffold protein carrying a second [4Fe-4S](2+) cluster] + N(6)-octanoyl-L-lysyl-[protein] + 2 oxidized [2Fe-2S]-[ferredoxin] + 2 S-adenosyl-L-methionine + 4 H(+) = [[Fe-S] cluster scaffold protein] + N(6)-[(R)-dihydrolipoyl]-L-lysyl-[protein] + 4 Fe(3+) + 2 hydrogen sulfide + 2 5'-deoxyadenosine + 2 L-methionine + 2 reduced [2Fe-2S]-[ferredoxin]. The protein operates within protein modification; protein lipoylation via endogenous pathway; protein N(6)-(lipoyl)lysine from octanoyl-[acyl-carrier-protein]: step 2/2. In terms of biological role, catalyzes the radical-mediated insertion of two sulfur atoms into the C-6 and C-8 positions of the octanoyl moiety bound to the lipoyl domains of lipoate-dependent enzymes, thereby converting the octanoylated domains into lipoylated derivatives. This Bartonella henselae (strain ATCC 49882 / DSM 28221 / CCUG 30454 / Houston 1) (Rochalimaea henselae) protein is Lipoyl synthase.